We begin with the raw amino-acid sequence, 2325 residues long: Otogelin-like protein (2325 aa).

A signal peptide spans 1–22; it reads MVPWRALSLPILLVSLRGYVCA. The VWFD 1 domain maps to 112 to 288; that stretch reads GICKTWGQYH…VLTPDDTKCV (177 aa). Intrachain disulfides connect C114-C248 and C136-C287. A glycan (N-linked (GlcNAc...) asparagine) is linked at N425. The 174-residue stretch at 472–645 folds into the VWFD 2 domain; it reads VQCSVVGDSH…HAWRVSSTCF (174 aa). 3 cysteine pairs are disulfide-bonded: C474–C609, C496–C644, and C518–C526. The region spanning 736–791 is the TIL 1 domain; it reads CQKGMLYHHCSSLCLRSCTSLSSPEQCKDDCAEGCNCPEGKFYEETLNFCVPIYHC. 2 N-linked (GlcNAc...) asparagine glycosylation sites follow: N817 and N867. A VWFD 3 domain is found at 937-1114; sequence AVCTVYGDRH…DLMEALKPCE (178 aa). 3 cysteine pairs are disulfide-bonded: C939/C1069, C961/C1113, and C983/C990. Residue N1280 is glycosylated (N-linked (GlcNAc...) asparagine). The region spanning 1366–1418 is the TIL 2 domain; it reads RYEPCATPCFKTCSDPEALACTFLPPVEGCLPYCPKNMILDETTLKCVHPEDC. Residues 1506-1695 enclose the VWFD 4 domain; that stretch reads CRCSMLSELS…SWEIEKSFEV (190 aa). Disulfide bonds link C1508–C1655 and C1549–C1571. N-linked (GlcNAc...) asparagine glycans are attached at residues N1576 and N2170. 4 disulfides stabilise this stretch: C2233–C2289, C2254–C2303, C2265–C2320, and C2269–C2322. A CTCK domain is found at 2233 to 2325; that stretch reads CKREERICQK…EPIDCTCQWN (93 aa). An N-linked (GlcNAc...) asparagine glycan is attached at N2296.

This sequence belongs to the otogelin family.

The protein resides in the secreted. This chain is Otogelin-like protein (Otogl), found in Mus musculus (Mouse).